A 177-amino-acid chain; its full sequence is ATP synthase subunit delta 1 (177 aa).

This sequence belongs to the ATPase delta chain family. As to quaternary structure, F-type ATPases have 2 components, F(1) - the catalytic core - and F(0) - the membrane proton channel. F(1) has five subunits: alpha(3), beta(3), gamma(1), delta(1), epsilon(1). F(0) has three main subunits: a(1), b(2) and c(10-14). The alpha and beta chains form an alternating ring which encloses part of the gamma chain. F(1) is attached to F(0) by a central stalk formed by the gamma and epsilon chains, while a peripheral stalk is formed by the delta and b chains.

Its subcellular location is the cell inner membrane. In terms of biological role, f(1)F(0) ATP synthase produces ATP from ADP in the presence of a proton or sodium gradient. F-type ATPases consist of two structural domains, F(1) containing the extramembraneous catalytic core and F(0) containing the membrane proton channel, linked together by a central stalk and a peripheral stalk. During catalysis, ATP synthesis in the catalytic domain of F(1) is coupled via a rotary mechanism of the central stalk subunits to proton translocation. Functionally, this protein is part of the stalk that links CF(0) to CF(1). It either transmits conformational changes from CF(0) to CF(1) or is implicated in proton conduction. The polypeptide is ATP synthase subunit delta 1 (Photobacterium profundum (strain SS9)).